Here is a 112-residue protein sequence, read N- to C-terminus: Protein Churchill (112 aa).

Positions 2, 5, 30, 33, 59, 61, 64, 66, 71, 88, and 91 each coordinate Zn(2+).

Belongs to the Churchill family.

Functionally, transcriptional activator that mediates FGF signaling during neural development. Plays a role in the regulation of cell movement. Does not bind DNA by itself. In Xenopus laevis (African clawed frog), this protein is Protein Churchill (churc1).